The sequence spans 233 residues: Ion-translocating oxidoreductase complex subunit E (233 aa).

The next 6 helical transmembrane spans lie at 18–38 (ALVQ…ATNA), 39–59 (LGLG…VSAL), 69–89 (IPIY…LINA), 92–112 (FGLY…CIVI), 128–148 (ALDG…LGAL), and 182–202 (PFLL…LLAG).

This sequence belongs to the NqrDE/RnfAE family. The complex is composed of six subunits: RnfA, RnfB, RnfC, RnfD, RnfE and RnfG.

The protein resides in the cell inner membrane. Part of a membrane-bound complex that couples electron transfer with translocation of ions across the membrane. This chain is Ion-translocating oxidoreductase complex subunit E, found in Yersinia pseudotuberculosis serotype O:3 (strain YPIII).